The chain runs to 465 residues: Lysophospholipid acyltransferase 2 (465 aa).

Transmembrane regions (helical) follow at residues 15-35 (VSVA…ISFL), 55-75 (FLSY…PMTI), 86-106 (LSGF…HVFY), 161-181 (SLIE…GPVF), 214-234 (AVFQ…QFPL), 266-286 (YFIW…FSGW), 356-376 (AVWH…ALMI), 399-419 (VLVL…SVGF), and 434-454 (VYYI…LVPV). The active site involves His359.

The protein belongs to the membrane-bound acyltransferase family. As to quaternary structure, interacts with GPAT9 and DGAT1. In terms of tissue distribution, expressed in rosette leaves, pollen grains, developing embryos and developing seeds.

It localises to the endoplasmic reticulum membrane. The enzyme catalyses a 1-acyl-sn-glycero-3-phosphocholine + an acyl-CoA = a 1,2-diacyl-sn-glycero-3-phosphocholine + CoA. The catalysed reaction is 1-(9Z-octadecenoyl)-sn-glycero-3-phosphocholine + (9Z)-octadecenoyl-CoA = 1,2-di-(9Z-octadecenoyl)-sn-glycero-3-phosphocholine + CoA. It catalyses the reaction 1-(9Z-octadecenoyl)-sn-glycero-3-phosphocholine + (9Z,12Z)-octadecadienoyl-CoA = 1-(9Z)-octadecenoyl-2-(9Z,12Z)-octadecadienoyl-sn-glycero-3-phosphocholine + CoA. It carries out the reaction (9Z,12Z,15Z)-octadecatrienoyl-CoA + 1-(9Z-octadecenoyl)-sn-glycero-3-phosphocholine = 1-(9Z-octadecaenoyl)-2-(9Z,12Z,15Z-octadecatrienoyl)-sn-glycero-3-phosphocholine + CoA. The enzyme catalyses a 1-acyl-sn-glycero-3-phosphoethanolamine + an acyl-CoA = a 1,2-diacyl-sn-glycero-3-phosphoethanolamine + CoA. The catalysed reaction is a 1-acyl-sn-glycero-3-phospho-L-serine + an acyl-CoA = a 1,2-diacyl-sn-glycero-3-phospho-L-serine + CoA. Functionally, lysophospholipid acyltransferase with broad specificity. Mediates the conversion of lysophosphatidylethanolamine (1-acyl-sn-glycero-3-phosphoethanolamine or LPE) into phosphatidylethanolamine (1,2-diacyl-sn-glycero-3-phosphoethanolamine or PE) (LPEAT activity). Catalyzes the acylation of lysophosphatidylserine (1-acyl-2-hydroxy-sn-glycero-3-phospho-L-serine or LPS) into phosphatidylserine (1,2-diacyl-sn-glycero-3-phospho-L-serine or PS) (LPSAT activity). Can convert lysophosphatidylcholine (1-acyl-sn-glycero-3-phosphocholine or LPC) into phosphatidylcholine (1,2-diacyl-sn-glycero-3-phosphocholine or PC) (LPCAT activity). Exhibits preference for C18-unsaturated acyl-CoA when transferring an acyl group to lysophosphatidylcholine. Can also utilize lysophosphatidylglycerol (LPG) as substrate in vitro. Has neither activity towards lysophosphatidic acid (LPA) nor lysophosphatidylinositol (LPI). Lysophospholipid acyltransferases catalyze the reacylation step of the phospholipid remodeling pathway also known as the Lands cycle. The primary function of the Lands cycle is to provide a route for acyl remodeling to modify fatty acid (FA) composition of phospholipids derived from the Kennedy pathway. Is involved in PC acyl editing and phosphocholine headgroup exchange between PC and diacylglycerols. This processes control the majority of acyl fluxes through PC to provide polyunsaturated fatty acids for triacylglycerols synthesis in seeds. Involved with LPCAT1 in the direct incorporation of newly synthesized fatty acids exported form the chloroplast into PC through acyl editing. The protein is Lysophospholipid acyltransferase 2 of Arabidopsis thaliana (Mouse-ear cress).